The primary structure comprises 518 residues: ORC1-type DNA replication protein 7 (518 aa).

94 to 98 contributes to the ATP binding site; that stretch reads TGKTA. The disordered stretch occupies residues 165-196; that stretch reads DDDPNALEIGGSPGDDRTGNESSEGSDVSDSF. Residues 186 to 196 are compositionally biased toward low complexity; that stretch reads SSEGSDVSDSF. ATP contacts are provided by tyrosine 318 and arginine 330.

Belongs to the CDC6/cdc18 family.

Involved in regulation of DNA replication. Required to initiate DNA replication of the circular chromosome at a nearby autonomously replicating sequence (ARS) oriC1. The sequence is that of ORC1-type DNA replication protein 7 (orc7) from Halobacterium salinarum (strain ATCC 700922 / JCM 11081 / NRC-1) (Halobacterium halobium).